We begin with the raw amino-acid sequence, 265 residues long: MKNLLLITFFVVSTVTALGGRGSKSALVLVAARSSENHPLHATDPITIWCAPDNPQVVIKTAHFIRSSDNEKLEAALNPTKKNATYTFGSPSVKDAGEYKCELDTPHGKISHKVFIYSRPVVHSHEHFTEHEGHEFHLESTGTTVEKGESVTLTCPVTGYPKPVVKWTKDSAPLALSQSVSMEGSTVIVTNANYTDAGTYSCEAVNEYTVNGKTSKMLLVVDKMVDVRSEFQWVYPLAVILITIFLLVVIIVFCEWRNKKSTSKA.

A signal peptide spans 1–17 (MKNLLLITFFVVSTVTA). Residues 18–232 (LGGRGSKSAL…KMVDVRSEFQ (215 aa)) lie on the Extracellular side of the membrane. Ig-like C2-type domains are found at residues 41–108 (HATD…TPHG) and 120–220 (PVVH…MLLV). N-linked (GlcNAc...) asparagine glycosylation is found at N83 and N193. A disulfide bridge connects residues C155 and C202. The chain crosses the membrane as a helical span at residues 233–253 (WVYPLAVILITIFLLVVIIVF). The Cytoplasmic segment spans residues 254–265 (CEWRNKKSTSKA).

In terms of tissue distribution, expressed in neurons and body wall muscles.

It localises to the cell membrane. Functionally, probably not involved in maintaining the position of ASI and ASH head neuron cell bodies and ventral nerve cord axons of PVQ, PVP, RMEV, AVK and HSN neurons. This Caenorhabditis elegans protein is Zwei Ig domain protein zig-1.